The primary structure comprises 211 residues: MGFSMFFSPENDVSHHSSPYASVDCTLSLGTPSTRLCNEDDERRFSSHTSDTIGWDFLNGSKKGGGGGGHNLLARRCANCDTTSTPLWRNGPRGPKSLCNACGIRFKKEERRASTARNSTSGGGSTAAGVPTLDHQASANYYYNNNNQYASSSPWHHQHNTQRVPYYSPANNEYSYVDDVRVVDHDVTTDPFLSWRLNVADRTGLVHDFTM.

A GATA-type zinc finger spans residues 77–102; sequence CANCDTTSTPLWRNGPRGPKSLCNAC. The interval 111–131 is disordered; that stretch reads RRASTARNSTSGGGSTAAGVP.

It belongs to the type IV zinc-finger family. Class B subfamily. In terms of assembly, forms heterodimers with GATA18.

It is found in the nucleus. In terms of biological role, transcriptional regulator that specifically binds 5'-GATA-3' or 5'-GAT-3' motifs within gene promoters. Regulates both flower and shoot apical meristem (SAM) development, especially for establishing organ boundaries in shoots and flowers, probably by controlling the number and position of WUS-expressing cells. The chain is GATA transcription factor 19 from Arabidopsis thaliana (Mouse-ear cress).